Here is a 337-residue protein sequence, read N- to C-terminus: MEDRMVSASYKNEDFDVEHSLRPEKLSEYIGQDKVKEKLSIFTKAAKMRNEALDHVLLYGPPGLGKTTLANIIAREMGGTLKVTSGPAIERPGDMAAILTSLNDYDVLFIDEIHRLNRTVEEIMYPAMEDNVLDIVIGKGAAAKSIRLDLPKFTLIGATTRVGLLTSPLRDRFGVLSAMEFYNEDELKEIILRSSKILGVVTTEEAAFEIARRSRGTPRIANRLLKRVRDYCDVKGDGVIDINIAKNALSLLEIDGEGFDKIDNKILEAIIDNFKGGPVGLETLAYFIGEELDTIQDVYEPYLLQKGFIVRMPRGRKATEKAYRHLKREFKEQTKLT.

A large ATPase domain (RuvB-L) region spans residues 1 to 182 (MEDRMVSASY…FGVLSAMEFY (182 aa)). Residues L21, R22, G63, K66, T67, T68, R172, Y182, and R219 each contribute to the ATP site. Position 67 (T67) interacts with Mg(2+). Positions 183–253 (NEDELKEIIL…IAKNALSLLE (71 aa)) are small ATPAse domain (RuvB-S). The interval 256–337 (GEGFDKIDNK…REFKEQTKLT (82 aa)) is head domain (RuvB-H). DNA contacts are provided by R311 and R316.

The protein belongs to the RuvB family. As to quaternary structure, homohexamer. Forms an RuvA(8)-RuvB(12)-Holliday junction (HJ) complex. HJ DNA is sandwiched between 2 RuvA tetramers; dsDNA enters through RuvA and exits via RuvB. An RuvB hexamer assembles on each DNA strand where it exits the tetramer. Each RuvB hexamer is contacted by two RuvA subunits (via domain III) on 2 adjacent RuvB subunits; this complex drives branch migration. In the full resolvosome a probable DNA-RuvA(4)-RuvB(12)-RuvC(2) complex forms which resolves the HJ.

It localises to the cytoplasm. The catalysed reaction is ATP + H2O = ADP + phosphate + H(+). Its function is as follows. The RuvA-RuvB-RuvC complex processes Holliday junction (HJ) DNA during genetic recombination and DNA repair, while the RuvA-RuvB complex plays an important role in the rescue of blocked DNA replication forks via replication fork reversal (RFR). RuvA specifically binds to HJ cruciform DNA, conferring on it an open structure. The RuvB hexamer acts as an ATP-dependent pump, pulling dsDNA into and through the RuvAB complex. RuvB forms 2 homohexamers on either side of HJ DNA bound by 1 or 2 RuvA tetramers; 4 subunits per hexamer contact DNA at a time. Coordinated motions by a converter formed by DNA-disengaged RuvB subunits stimulates ATP hydrolysis and nucleotide exchange. Immobilization of the converter enables RuvB to convert the ATP-contained energy into a lever motion, pulling 2 nucleotides of DNA out of the RuvA tetramer per ATP hydrolyzed, thus driving DNA branch migration. The RuvB motors rotate together with the DNA substrate, which together with the progressing nucleotide cycle form the mechanistic basis for DNA recombination by continuous HJ branch migration. Branch migration allows RuvC to scan DNA until it finds its consensus sequence, where it cleaves and resolves cruciform DNA. This chain is Holliday junction branch migration complex subunit RuvB, found in Clostridium novyi (strain NT).